Reading from the N-terminus, the 174-residue chain is uncharacterized protein (174 aa).

Residues Thr-78–Glu-97 are disordered.

The protein to yeast YMR295c.

This is an uncharacterized protein from Saccharomyces cerevisiae (strain ATCC 204508 / S288c) (Baker's yeast).